Here is a 468-residue protein sequence, read N- to C-terminus: ERO1-like protein alpha (468 aa).

Residues methionine 1–glycine 23 form the signal peptide. 8 cysteine pairs are disulfide-bonded: cysteine 35/cysteine 48, cysteine 37/cysteine 46, cysteine 85/cysteine 391, cysteine 94/cysteine 99, cysteine 94/cysteine 131, cysteine 99/cysteine 104, cysteine 208/cysteine 241, and cysteine 394/cysteine 397. A phosphoserine mark is found at serine 106 and serine 143. Position 145 is a phosphoserine; by FAM20C (serine 145). FAD is bound by residues arginine 187, threonine 189, and tryptophan 200. FAD is bound by residues serine 252 and histidine 255. Asparagine 280 is a glycosylation site (N-linked (GlcNAc...) asparagine). Residues arginine 287 and arginine 300 each coordinate FAD. Residue asparagine 384 is glycosylated (N-linked (GlcNAc...) asparagine).

Belongs to the EROs family. Predominantly monomer. May function both as a monomer and a homodimer. Interacts with PDILT. Interacts with ERP44; the interaction results in retention of ERO1A in the endoplasmic reticulum. The cofactor is FAD. Post-translationally, N-glycosylated. In terms of processing, the Cys-94/Cys-99 and Cys-394/Cys-397 disulfide bonds constitute the redox-active center. The Cys-94/Cys-99 disulfide bond may accept electron from P4HB and funnel them to the active site disulfide Cys-394/Cys-397. The regulatory Cys-99/Cys-104 disulfide bond stabilizes the other regulatory bond Cys-94/Cys-131. Phosphorylated on Ser-145 by FAM20C in the Golgi which increases its enzymatic activity. Phosphorylation is induced by lactation. It is also induced by hypoxia and reductive stress. Widely expressed at low level. Expressed at high level in upper digestive tract. Highly expressed in esophagus. Weakly expressed in stomach and duodenum.

It localises to the endoplasmic reticulum membrane. The protein resides in the golgi apparatus lumen. Its subcellular location is the secreted. The protein localises to the cell projection. It is found in the dendrite. Its activity is regulated as follows. Enzyme activity is tightly regulated to prevent the accumulation of reactive oxygen species in the endoplasmic reticulum. Reversibly down-regulated by the formation of disulfide bonds between the active site Cys-94 and Cys-131, and between Cys-99 and Cys-104. Glutathione may be required to regulate its activity in the endoplasmic reticulum. Oxidoreductase involved in disulfide bond formation in the endoplasmic reticulum. Efficiently reoxidizes P4HB/PDI, the enzyme catalyzing protein disulfide formation, in order to allow P4HB to sustain additional rounds of disulfide formation. Following P4HB reoxidation, passes its electrons to molecular oxygen via FAD, leading to the production of reactive oxygen species (ROS) in the cell. Required for the proper folding of immunoglobulins. Plays an important role in ER stress-induced, CHOP-dependent apoptosis by activating the inositol 1,4,5-trisphosphate receptor IP3R1. Involved in the release of the unfolded cholera toxin from reduced P4HB/PDI in case of infection by V.cholerae, thereby playing a role in retrotranslocation of the toxin. This chain is ERO1-like protein alpha, found in Homo sapiens (Human).